Consider the following 83-residue polypeptide: Toxin To12 (83 aa).

Residues 1-19 (MKGLILFICGFMMIGVILA) form the signal peptide. One can recognise an LCN-type CS-alpha/beta domain in the interval 20 to 82 (KEGYPMDHEG…VWDYYNNKCG (63 aa)). 4 disulfides stabilise this stretch: Cys-30–Cys-81, Cys-34–Cys-57, Cys-42–Cys-62, and Cys-46–Cys-64. Position 81 is a cysteine amide (Cys-81).

It belongs to the long (4 C-C) scorpion toxin superfamily. Sodium channel inhibitor family. Beta subfamily. As to expression, expressed by the venom gland.

It localises to the secreted. Functionally, beta toxins bind voltage-independently at site-4 of sodium channels (Nav) and shift the voltage of activation toward more negative potentials thereby affecting sodium channel activation and promoting spontaneous and repetitive firing. The polypeptide is Toxin To12 (Tityus obscurus (Amazonian scorpion)).